Here is a 762-residue protein sequence, read N- to C-terminus: Poly(A) RNA polymerase CID14 (762 aa).

The tract at residues 1–123 is disordered; the sequence is MPTGFQPAES…KKEEQKAAER (123 aa). Over residues 50–62 the composition is skewed to basic residues; it reads KKNKKDKKKKGSK. Basic and acidic residues-rich tracts occupy residues 65–75 and 99–123; these read QPVDEPDKKDG and RKRD…AAER. Ser189 provides a ligand contact to ATP. Mg(2+)-binding residues include Asp200 and Asp202. Positions 266, 291, 309, and 310 each coordinate ATP. Residues 336–393 enclose the PAP-associated domain; that stretch reads NLGTLLIEFFELFGRNFNYNDVGISIRRGGFYFSKASRGWMKGQSFLLSIEDPQDKDN. Residues 482–762 form a disordered region; sequence SIPLGADPKP…LGQSSGDMSD (281 aa). The segment covering 536–549 has biased composition (acidic residues); the sequence is VEDDELESDDDSDS. Positions 572-581 are enriched in polar residues; it reads RTANSRSTSR. Lys610 serves as a coordination point for ATP. Acidic residues-rich tracts occupy residues 677–687 and 697–707; these read GEEEEEIDSDE and SDGDLGSEDEI. A compositionally biased stretch (polar residues) spans 753-762; that stretch reads LGQSSGDMSD.

Belongs to the DNA polymerase type-B-like family. As to quaternary structure, component of the TRAMP complex. Mg(2+) is required as a cofactor. Requires Mn(2+) as cofactor.

It localises to the nucleus. It is found in the nucleolus. It carries out the reaction RNA(n) + ATP = RNA(n)-3'-adenine ribonucleotide + diphosphate. Functionally, required for 3' polyadenylation of the 5.8S and 25S rRNAs as a prelude to their degradation in the exosome. Involved in the nucleolar organization to ensure faithful chromosome segregation during mitosis. In Cryptococcus neoformans var. neoformans serotype D (strain JEC21 / ATCC MYA-565) (Filobasidiella neoformans), this protein is Poly(A) RNA polymerase CID14.